A 209-amino-acid polypeptide reads, in one-letter code: Uracil phosphoribosyltransferase (209 aa).

5-phospho-alpha-D-ribose 1-diphosphate is bound by residues arginine 79, arginine 104, and 131–139 (DPMLATGAS). Uracil-binding positions include isoleucine 194 and 199-201 (GDA). Aspartate 200 is a 5-phospho-alpha-D-ribose 1-diphosphate binding site.

It belongs to the UPRTase family. Mg(2+) serves as cofactor.

It catalyses the reaction UMP + diphosphate = 5-phospho-alpha-D-ribose 1-diphosphate + uracil. It functions in the pathway pyrimidine metabolism; UMP biosynthesis via salvage pathway; UMP from uracil: step 1/1. Its activity is regulated as follows. Allosterically activated by GTP. Catalyzes the conversion of uracil and 5-phospho-alpha-D-ribose 1-diphosphate (PRPP) to UMP and diphosphate. This Staphylococcus saprophyticus subsp. saprophyticus (strain ATCC 15305 / DSM 20229 / NCIMB 8711 / NCTC 7292 / S-41) protein is Uracil phosphoribosyltransferase.